A 172-amino-acid polypeptide reads, in one-letter code: Protein-export protein SecB (172 aa).

Belongs to the SecB family. In terms of assembly, homotetramer, a dimer of dimers. One homotetramer interacts with 1 SecA dimer.

Its subcellular location is the cytoplasm. In terms of biological role, one of the proteins required for the normal export of preproteins out of the cell cytoplasm. It is a molecular chaperone that binds to a subset of precursor proteins, maintaining them in a translocation-competent state. It also specifically binds to its receptor SecA. The protein is Protein-export protein SecB of Stenotrophomonas maltophilia (strain K279a).